The chain runs to 251 residues: CDP-diacylglycerol pyrophosphatase (251 aa).

A helical membrane pass occupies residues 5 to 25 (GYFLLAVIVIVAAAGVGYWKF).

The protein belongs to the Cdh family.

It localises to the cell inner membrane. The catalysed reaction is a CDP-1,2-diacyl-sn-glycerol + H2O = a 1,2-diacyl-sn-glycero-3-phosphate + CMP + 2 H(+). Its pathway is phospholipid metabolism; CDP-diacylglycerol degradation; phosphatidate from CDP-diacylglycerol: step 1/1. This Salmonella enteritidis PT4 (strain P125109) protein is CDP-diacylglycerol pyrophosphatase.